Reading from the N-terminus, the 539-residue chain is Glucose-6-phosphate isomerase (539 aa).

Residue glutamate 349 is the Proton donor of the active site. Residues histidine 380 and lysine 508 contribute to the active site. Residues 519–539 are disordered; it reads ESGASGQHDPSTAGLIQRLKR.

It belongs to the GPI family.

Its subcellular location is the cytoplasm. It catalyses the reaction alpha-D-glucose 6-phosphate = beta-D-fructose 6-phosphate. It participates in carbohydrate biosynthesis; gluconeogenesis. Its pathway is carbohydrate degradation; glycolysis; D-glyceraldehyde 3-phosphate and glycerone phosphate from D-glucose: step 2/4. Functionally, catalyzes the reversible isomerization of glucose-6-phosphate to fructose-6-phosphate. The chain is Glucose-6-phosphate isomerase from Caulobacter vibrioides (strain ATCC 19089 / CIP 103742 / CB 15) (Caulobacter crescentus).